The sequence spans 253 residues: Ribosomal RNA small subunit methyltransferase G (253 aa).

S-adenosyl-L-methionine contacts are provided by residues Gly-84, Leu-89, 136–137 (IE), and Arg-155.

Belongs to the methyltransferase superfamily. RNA methyltransferase RsmG family.

The protein resides in the cytoplasm. In terms of biological role, specifically methylates the N7 position of a guanine in 16S rRNA. The chain is Ribosomal RNA small subunit methyltransferase G from Prochlorococcus marinus (strain SARG / CCMP1375 / SS120).